A 115-amino-acid chain; its full sequence is MDPLIQELTKEQIRDDIPAFRAGDTVTVHVRVVEGTHERIQLFEGVVIKKKGTGIGATYTVRKIASGVGVERTFPVNDPRVAKVEVKRHGRVRRAKLYYLRERHGKSARIAEARR.

This sequence belongs to the bacterial ribosomal protein bL19 family.

In terms of biological role, this protein is located at the 30S-50S ribosomal subunit interface and may play a role in the structure and function of the aminoacyl-tRNA binding site. This Lactobacillus acidophilus (strain ATCC 700396 / NCK56 / N2 / NCFM) protein is Large ribosomal subunit protein bL19.